The sequence spans 860 residues: MTEGTKKTSKKFKFFKFKGFGSLSNLPRSFTLRRSSASISRQSHLEPDTFEATQDDMVTVPKSPPAYARSSDMYSHMGTMPRPSIKKAQNSQAARQAQEAGPKPNLVPGGVPDPPGLEAAKEVMVKATGPLEDTPAMEPNPSAVEVDPIRKPEVPTGDVEEERPPRDVHSERAAGEPEAGSDYVKFSKEKYILDSSPEKLHKELEEELKLSSTDLRSHAWYHGRIPREVSETLVQRNGDFLIRDSLTSLGDYVLTCRWRNQALHFKINKVVVKAGESYTHIQYLFEQESFDHVPALVRYHVGSRKAVSEQSGAIIYCPVNRTFPLRYLEASYGLGQGSSKPASPVSPSGPKGSHMKRRSVTMTDGLTADKVTRSDGCPTSTSLPRPRDSIRSCALSMDQIPDLHSPMSPISESPSSPAYSTVTRVHAAPAAPSATALPASPVARRSSEPQLCPGSAPKTHGESDKGPHTSPSHTLGKASPSPSLSSYSDPDSGHYCQLQPPVRGSREWAATETSSQQARSYGERLKELSENGAPEGDWGKTFTVPIVEVTSSFNPATFQSLLIPRDNRPLEVGLLRKVKELLAEVDARTLARHVTKVDCLVARILGVTKEMQTLMGVRWGMELLTLPHGRQLRLDLLERFHTMSIMLAVDILGCTGSAEERAALLHKTIQLAAELRGTMGNMFSFAAVMGALDMAQISRLEQTWVTLRQRHTEGAILYEKKLKPFLKSLNEGKEGPPLSNTTFPHVLPLITLLECDSAPPEGPEPWGSTEHGVEVVLAHLEAARTVAHHGGLYHTNAEVKLQGFQARPELLEVFSTEFQMRLLWGSQGASSSQARRYEKFDKVLTALSHKLEPAVRSSEL.

Serine 22 is subject to Phosphoserine. Disordered stretches follow at residues glutamate 51–leucine 117 and proline 130–glycine 180. Positions glutamate 162–glycine 175 are enriched in basic and acidic residues. In terms of domain architecture, SH2 spans tryptophan 220 to valine 319. Tyrosine 278 and tyrosine 283 each carry phosphotyrosine. A disordered region spans residues glycine 335–aspartate 537. At serine 359 the chain carries Phosphoserine. Low complexity-rich tracts occupy residues serine 405–serine 420, alanine 427–alanine 443, and serine 479–proline 490. Residue serine 440 is modified to Phosphoserine. One can recognise a Ras-GEF domain in the interval aspartate 586–alanine 854. Residue tyrosine 793 is modified to Phosphotyrosine.

Component of a complex comprised of SH2D3C, BCAR1/CAS, and CRK. Within the complex, interacts with CRK and (via C-terminus) with BCAR1/CAS (via C-terminus). Interacts with NEDD9/HEF1. Interacts with EPHB2. As to quaternary structure, interacts with NEDD9/HEF1. Interacts with BCAR1/CAS. Interacts with PTK2B. In terms of assembly, interacts (via C-terminus) with BCAR1/CAS (via C-terminus). Interacts with IGF1. Phosphorylated by MAPK/ERK upon T-cell receptor stimulation in T-cells. As to expression, ubiquitously expressed.

Its subcellular location is the cytoplasm. It localises to the cell membrane. The protein localises to the cell projection. It is found in the axon. The protein resides in the ruffle membrane. Functionally, acts as an adapter protein that mediates cell signaling pathways involved in cellular functions such as cell adhesion and migration, tissue organization, and the regulation of the immune response. Plays a role in integrin-mediated cell adhesion through BCAR1-CRK-RAPGEF1 signaling and activation of the small GTPase RAP1. Promotes cell migration and invasion through the extracellular matrix. Required for marginal zone B-cell development and thymus-independent type 2 immune responses. Mediates migration and adhesion of B cells in the splenic marginal zone via promoting hyperphosphorylation of NEDD9/CASL. Plays a role in CXCL13-induced chemotaxis of B-cells. Plays a role in the migration of olfactory sensory neurons (OSNs) into the forebrain and the innervation of the olfactory bulb by the OSN axons during development. Required for the efficient tyrosine phosphorylation of BCAR1 in OSN axons. Its function is as follows. Important regulator of chemokine-induced, integrin-mediated T lymphocyte adhesion and migration, acting upstream of RAP1. Required for tissue-specific adhesion of T lymphocytes to peripheral tissues. Required for basal and CXCL2 stimulated serine-threonine phosphorylation of NEDD9. May be involved in the regulation of T-cell receptor-mediated IL2 production through the activation of the JNK pathway in T-cells. In terms of biological role, may be involved in the BCAR1/CAS-mediated JNK activation pathway. The sequence is that of SH2 domain-containing protein 3C (SH2D3C) from Homo sapiens (Human).